We begin with the raw amino-acid sequence, 406 residues long: Tyrosine--tRNA ligase (406 aa).

Tyr35 contacts L-tyrosine. The 'HIGH' region motif lies at 40–49 (PTADSLHVGH). Residues Tyr168 and Gln172 each contribute to the L-tyrosine site. The 'KMSKS' region signature appears at 228–232 (KMGKT). Lys231 is an ATP binding site. Residues 340 to 404 (STVLDIIAKT…RGKKNYNKIE (65 aa)) form the S4 RNA-binding domain.

This sequence belongs to the class-I aminoacyl-tRNA synthetase family. TyrS type 1 subfamily. In terms of assembly, homodimer.

It localises to the cytoplasm. It carries out the reaction tRNA(Tyr) + L-tyrosine + ATP = L-tyrosyl-tRNA(Tyr) + AMP + diphosphate + H(+). Functionally, catalyzes the attachment of tyrosine to tRNA(Tyr) in a two-step reaction: tyrosine is first activated by ATP to form Tyr-AMP and then transferred to the acceptor end of tRNA(Tyr). In Clostridium botulinum (strain Alaska E43 / Type E3), this protein is Tyrosine--tRNA ligase.